The sequence spans 427 residues: Serine--tRNA ligase (427 aa).

Residue 228-230 (TSE) coordinates L-serine. 259–261 (RSE) lines the ATP pocket. Glutamate 282 provides a ligand contact to L-serine. 346–349 (EISS) lines the ATP pocket. Position 384 (serine 384) interacts with L-serine.

It belongs to the class-II aminoacyl-tRNA synthetase family. Type-1 seryl-tRNA synthetase subfamily. In terms of assembly, homodimer. The tRNA molecule binds across the dimer.

It localises to the cytoplasm. The catalysed reaction is tRNA(Ser) + L-serine + ATP = L-seryl-tRNA(Ser) + AMP + diphosphate + H(+). The enzyme catalyses tRNA(Sec) + L-serine + ATP = L-seryl-tRNA(Sec) + AMP + diphosphate + H(+). Its pathway is aminoacyl-tRNA biosynthesis; selenocysteinyl-tRNA(Sec) biosynthesis; L-seryl-tRNA(Sec) from L-serine and tRNA(Sec): step 1/1. Catalyzes the attachment of serine to tRNA(Ser). Is also able to aminoacylate tRNA(Sec) with serine, to form the misacylated tRNA L-seryl-tRNA(Sec), which will be further converted into selenocysteinyl-tRNA(Sec). In Ehrlichia ruminantium (strain Welgevonden), this protein is Serine--tRNA ligase.